A 135-amino-acid chain; its full sequence is Translation initiation factor 2 subunit beta (135 aa).

The protein belongs to the eIF-2-beta/eIF-5 family. In terms of assembly, heterotrimer composed of an alpha, a beta and a gamma chain.

Its function is as follows. eIF-2 functions in the early steps of protein synthesis by forming a ternary complex with GTP and initiator tRNA. The protein is Translation initiation factor 2 subunit beta (eif2b) of Methanothermobacter thermautotrophicus (strain ATCC 29096 / DSM 1053 / JCM 10044 / NBRC 100330 / Delta H) (Methanobacterium thermoautotrophicum).